The chain runs to 660 residues: Macrolide export ATP-binding/permease protein MacB (660 aa).

Positions 10 to 248 (LVLENIVRKF…TDSQALYGKQ (239 aa)) constitute an ABC transporter domain. 46–53 (GASGSGKS) contributes to the ATP binding site. Helical transmembrane passes span 285–305 (FLTMLGVIIGIGAIIAMVALG), 532–552 (ILTLLVSSIAAISLIVGGIGV), 593–613 (VIGGGLGILFGMSIGGLFLLF), and 625–645 (SIILSLTFSTLIGVCFGFSPA).

The protein belongs to the ABC transporter superfamily. Macrolide exporter (TC 3.A.1.122) family. As to quaternary structure, homodimer.

The protein localises to the cell inner membrane. Non-canonical ABC transporter that contains transmembrane domains (TMD), which form a pore in the inner membrane, and an ATP-binding domain (NBD), which is responsible for energy generation. Confers resistance against macrolides. The chain is Macrolide export ATP-binding/permease protein MacB from Bartonella henselae (strain ATCC 49882 / DSM 28221 / CCUG 30454 / Houston 1) (Rochalimaea henselae).